The following is a 382-amino-acid chain: O-methyltransferase okaF (382 aa).

S-adenosyl-L-methionine-binding residues include Glu-249 and Arg-287. The active-site Proton acceptor is His-291.

It belongs to the class I-like SAM-binding methyltransferase superfamily. Cation-independent O-methyltransferase family.

The enzyme catalyses 3-desmethyl okaramine B + S-adenosyl-L-methionine = okaramine B + S-adenosyl-L-homocysteine + H(+). Its pathway is alkaloid biosynthesis. O-methyltransferase; part of the gene cluster that mediates the biosynthesis of okaramine B, a prenylated indole alkaloid that possesses an unusual octacyclic ring system, including a four-membered azetidine ring and an eight-membered azocine ring, and that exhibits insecticidal activity against silkworm larvae. Within the pathway, okaF catalyzes the last step which is the methylation of 3-desmethyl okaramine B to produce okaramine B. With okaG, OkaF is also able to produce okaramine D from okaramine E. The biosynthesis begins with the NRPS okaA that condenses two tryptophan molecules into cyclo(L-Trp-L-Trp). Prenylation by the prenyltransferase okaC then leads to the formation of cyclo(N8-(alpha,alpha-dimethylallyl)-L-Trp-6a-(alpha,alpha-dime-thylallyl)-L-Trp). This is followed by indole 2,3-epoxidation by the FAD-dependent monooxygenase okaB to facilitate the formation of the hexahydropyrrolo[2,3-b]indole (HPI) moiety of okaramine C. The cytochrome P450 monooxygenase okaD then likely catalyzes formation of the eight-membered ring of okaramine A. The dioxygenase okaE further forms the unusual 2-dimethyl-3-methyl-azetidine ring to yield 12-deshydroxyl okaramine E, as well as the hydroxylation of 12-deshydroxyl okaramine E to produce okaramine E. The cytochrome P450 monoxygenase okaG converts 12-deshydroxyl okaramine E into 3-desmethyl okaramine B which is further methylated by the methyltransferase okaF into okaramine B. In a shunt pathway, okaG and okaF together are also able to convert okaramine E into okaramine D. Okaramine H is produced by nonenzymatic conversion from okaramine A. The chain is O-methyltransferase okaF from Penicillium ochrochloron.